The sequence spans 860 residues: JmjC domain-containing histone demethylation protein 1 (860 aa).

Disordered regions lie at residues 1–45 (MSEQ…EEGK), 117–212 (STSP…PKRK), and 408–440 (DVKE…GGEI). A PHD-type zinc finger spans residues 23–116 (PEPCPLCRET…KWYCAPCLAR (94 aa)). Basic and acidic residues-rich tracts occupy residues 183 to 192 (IDMKSEREQQ) and 408 to 433 (DVKE…HLTE). Residues 416–579 (NDSREGSEIR…TQLRLRQIEI (164 aa)) enclose the JmjC domain. T471 contacts substrate. Positions 474 and 476 each coordinate Fe cation. K491 provides a ligand contact to substrate. H547 is a binding site for Fe cation. 2 disordered regions span residues 744–795 (HPPA…ANEN) and 837–860 (GPKL…DIDH). Residues 750–763 (ENRQSPQIETTTVQ) are compositionally biased toward polar residues. The span at 767-795 (PSTSSSDAISGSGPGASPGASANGGANEN) shows a compositional bias: low complexity.

The protein belongs to the JHDM1 histone demethylase family. The cofactor is Fe(2+).

The protein localises to the nucleus. It carries out the reaction N(6),N(6)-dimethyl-L-lysyl(36)-[histone H3] + 2 2-oxoglutarate + 2 O2 = L-lysyl(36)-[histone H3] + 2 formaldehyde + 2 succinate + 2 CO2. In terms of biological role, histone demethylase that specifically demethylates 'Lys-36' of histone H3, thereby playing a central role in histone code. The chain is JmjC domain-containing histone demethylation protein 1 (JHD1) from Cryptococcus neoformans var. neoformans serotype D (strain JEC21 / ATCC MYA-565) (Filobasidiella neoformans).